Consider the following 340-residue polypeptide: Protein-arginine kinase (340 aa).

Positions 14-241 (IVLSSRIRLA…YQIINQEKLA (228 aa)) constitute a Phosphagen kinase C-terminal domain. ATP-binding positions include 17–21 (SSRIR), arginine 112, 163–167 (RASVM), and 194–199 (RGIYGE).

Belongs to the ATP:guanido phosphotransferase family.

It carries out the reaction L-arginyl-[protein] + ATP = N(omega)-phospho-L-arginyl-[protein] + ADP + H(+). Catalyzes the specific phosphorylation of arginine residues in proteins. The sequence is that of Protein-arginine kinase from Clostridium tetani (strain Massachusetts / E88).